A 273-amino-acid chain; its full sequence is 2,3,4,5-tetrahydropyridine-2,6-dicarboxylate N-succinyltransferase (273 aa).

Belongs to the transferase hexapeptide repeat family.

Its subcellular location is the cytoplasm. The enzyme catalyses (S)-2,3,4,5-tetrahydrodipicolinate + succinyl-CoA + H2O = (S)-2-succinylamino-6-oxoheptanedioate + CoA. It functions in the pathway amino-acid biosynthesis; L-lysine biosynthesis via DAP pathway; LL-2,6-diaminopimelate from (S)-tetrahydrodipicolinate (succinylase route): step 1/3. The polypeptide is 2,3,4,5-tetrahydropyridine-2,6-dicarboxylate N-succinyltransferase (Acinetobacter baumannii (strain AB307-0294)).